We begin with the raw amino-acid sequence, 299 residues long: Apolipoprotein E (299 aa).

The first 18 residues, 1 to 18 (MKVLCTVLVVTLLAGCRA), serve as a signal peptide directing secretion. 7 repeat units span residues 74–95 (VLMEDTMKAVKAYKSELEQELV), 96–117 (PMAEDTKARLSKELQAAQARLG), 118–139 (ADMEEVRNRLAQYRNEMQAMLG), 140–161 (QSADELRARLASHLRKLRKRML), 162–183 (RDAEDLQKRLAVYKDGASEGAE), 184–205 (RGVSAIRERLGSLVEQSRVRAA), and 224–245 (GRLEEVRGQAQDRLEEMREQME). Residues 74–245 (VLMEDTMKAV…RLEEMREQME (172 aa)) form an 8 X 22 AA approximate tandem repeats region. Methionine sulfoxide is present on Met-137. A Phosphoserine modification is found at Ser-141. Residues 152 to 162 (HLRKLRKRMLR) are LDL and other lipoprotein receptors binding. 156 to 159 (LRKR) contributes to the heparin binding site. Residues 204–273 (AALTGQPLQE…GWFEPMVEDM (70 aa)) form a lipid-binding and lipoprotein association region. Residue 219 to 226 (GKQLRGRL) coordinates heparin. The segment at 261-273 (RLKGWFEPMVEDM) is specificity for association with VLDL.

The protein belongs to the apolipoprotein A1/A4/E family. As to quaternary structure, homotetramer. May interact with ABCA1; functionally associated with ABCA1 in the biogenesis of HDLs. May interact with APP/A4 amyloid-beta peptide; the interaction is extremely stable in vitro but its physiological significance is unclear. May interact with MAPT. May interact with MAP2. In the cerebrospinal fluid, interacts with secreted SORL1. Interacts with PMEL; this allows the loading of PMEL luminal fragment on ILVs to induce fibril nucleation. Post-translationally, APOE exists as multiple glycosylated and sialylated glycoforms within cells and in plasma. The extent of glycosylation and sialylation are tissue and context specific. Glycated in plasma VLDL. In terms of processing, phosphorylated by FAM20C in the extracellular medium.

Its subcellular location is the secreted. It localises to the extracellular space. It is found in the extracellular matrix. The protein resides in the extracellular vesicle. The protein localises to the endosome. Its subcellular location is the multivesicular body. In terms of biological role, APOE is an apolipoprotein, a protein associating with lipid particles, that mainly functions in lipoprotein-mediated lipid transport between organs via the plasma and interstitial fluids. APOE is a core component of plasma lipoproteins and is involved in their production, conversion and clearance. Apolipoproteins are amphipathic molecules that interact both with lipids of the lipoprotein particle core and the aqueous environment of the plasma. As such, APOE associates with chylomicrons, chylomicron remnants, very low density lipoproteins (VLDL) and intermediate density lipoproteins (IDL) but shows a preferential binding to high-density lipoproteins (HDL). It also binds a wide range of cellular receptors including the LDL receptor/LDLR, the LDL receptor-related proteins LRP1, LRP2 and LRP8 and the very low-density lipoprotein receptor/VLDLR that mediate the cellular uptake of the APOE-containing lipoprotein particles. Finally, APOE also has a heparin-binding activity and binds heparan-sulfate proteoglycans on the surface of cells, a property that supports the capture and the receptor-mediated uptake of APOE-containing lipoproteins by cells. A main function of APOE is to mediate lipoprotein clearance through the uptake of chylomicrons, VLDLs, and HDLs by hepatocytes. APOE is also involved in the biosynthesis by the liver of VLDLs as well as their uptake by peripheral tissues ensuring the delivery of triglycerides and energy storage in muscle, heart and adipose tissues. By participating in the lipoprotein-mediated distribution of lipids among tissues, APOE plays a critical role in plasma and tissues lipid homeostasis. APOE is also involved in two steps of reverse cholesterol transport, the HDLs-mediated transport of cholesterol from peripheral tissues to the liver, and thereby plays an important role in cholesterol homeostasis. First, it is functionally associated with ABCA1 in the biogenesis of HDLs in tissues. Second, it is enriched in circulating HDLs and mediates their uptake by hepatocytes. APOE also plays an important role in lipid transport in the central nervous system, regulating neuron survival and sprouting. This chain is Apolipoprotein E (APOE), found in Octodon degus (Degu).